An 85-amino-acid polypeptide reads, in one-letter code: Large ribosomal subunit protein bL27 (85 aa).

The interval 1-21 is disordered; sequence MAHKKGQGSTQNNRDSAGRRL.

The protein belongs to the bacterial ribosomal protein bL27 family.

The polypeptide is Large ribosomal subunit protein bL27 (Wolinella succinogenes (strain ATCC 29543 / DSM 1740 / CCUG 13145 / JCM 31913 / LMG 7466 / NCTC 11488 / FDC 602W) (Vibrio succinogenes)).